Consider the following 704-residue polypeptide: Protein NBR1 homolog (704 aa).

Residue Met-1 is modified to N-acetylmethionine. The PB1 domain occupies 7-92 (ALVVKVSYGG…KFLKINVNAG (86 aa)). Polar residues-rich tracts occupy residues 95-108 (TNSA…SSTP), 171-189 (PQES…SGAS), and 223-233 (HSKTSGHVPNS). 2 disordered regions span residues 95–114 (TNSA…MPNP) and 171–233 (PQES…VPNS). The segment at 286-336 (HKGIRCDGCGVLPITGPRFKSKVKEDYDLCTICYSVMGNEGDYTRMDKPVS) adopts a ZZ-type; degenerate zinc-finger fold. Positions 291, 294, 315, and 318 each coordinate Zn(2+). Residues 657–701 (GVSEWDPILEELQEMGFCDDVTNKRLLKKNNGSIKGVVMDLLTGE) form the UBA domain. Residues 661–664 (WDPI) carry the LIR motif.

In terms of assembly, homodimer. Interacts with ATG8A, ATG8B, ATG8C, ATG8D, ATG8F and ATG8I. Binds to ubiquitin.

Its subcellular location is the cytoplasm. The protein localises to the vacuole. Its function is as follows. Autophagic substrate degraded in the vacuole by non-selective autophagy. Requires ATG8 protein expression to be recognized as an autophagic substrate. Acts probably as a receptor for autophagosomal degradation of ubiquitinated proteins. Targets ubiquitinated protein aggregates derived from denatured or damaged non-native proteins generated under stress conditions. Functions additively with the E3 ubiquitin-protein ligase CHIP for autophagosomal degradation of proteotoxic aggregates formed under stress conditions. This is Protein NBR1 homolog from Arabidopsis thaliana (Mouse-ear cress).